We begin with the raw amino-acid sequence, 294 residues long: UDP-3-O-acyl-N-acetylglucosamine deacetylase (294 aa).

Zn(2+) is bound by residues H75, H232, and D236. The active-site Proton donor is H259.

The protein belongs to the LpxC family. It depends on Zn(2+) as a cofactor.

It catalyses the reaction a UDP-3-O-[(3R)-3-hydroxyacyl]-N-acetyl-alpha-D-glucosamine + H2O = a UDP-3-O-[(3R)-3-hydroxyacyl]-alpha-D-glucosamine + acetate. Its pathway is glycolipid biosynthesis; lipid IV(A) biosynthesis; lipid IV(A) from (3R)-3-hydroxytetradecanoyl-[acyl-carrier-protein] and UDP-N-acetyl-alpha-D-glucosamine: step 2/6. In terms of biological role, catalyzes the hydrolysis of UDP-3-O-myristoyl-N-acetylglucosamine to form UDP-3-O-myristoylglucosamine and acetate, the committed step in lipid A biosynthesis. The sequence is that of UDP-3-O-acyl-N-acetylglucosamine deacetylase from Campylobacter hominis (strain ATCC BAA-381 / DSM 21671 / CCUG 45161 / LMG 19568 / NCTC 13146 / CH001A).